A 156-amino-acid chain; its full sequence is MVRITALMSGSILLFALQALAMPVETTSVEPAAEKRGLKLAFKRGEEVEPAEEKRGLKLAFKRGEEVEPAEEKRGLKLAFKRGEEVEPAEEKRGLKLAFKRGEEVEPAEEKRGLKLAFKRGEEVEPAEEKRGLKLAFKRGEEVEPAEEKRGLKLAF.

A signal peptide spans 1–21 (MVRITALMSGSILLFALQALA). 7 consecutive propeptides follow at residues 22–36 (MPVETTSVEPAAEKR), 43–55 (KRGEEVEPAEEKR), 62–74 (KRGEEVEPAEEKR), 81–93 (KRGEEVEPAEEKR), 100–112 (KRGEEVEPAEEKR), 119–131 (KRGEEVEPAEEKR), and 138–150 (KRGEEVEPAEEKR).

VicA1 is processed by several endopeptidases including kexin proteases as well as the cluster-specific peptidases vicP1 and vicP2 to produce 7 identical copies of the hexapeptide Gly-Leu-Lys-Leu-Ala-Phe, that are further modified to yield victorins. After being excised from the precursor peptide, the core peptides are cyclized and modified post-translationally by enzymes encoded within the gene cluster. The ustYa family protein vicYb is required for the formation of the macrocycle in victorin and the copper amine oxidases (CAOs) vicK1 and vicK2 are responsible for converting victorin to the active form by oxidizing the N-terminal glycyl residue in the peptides to glyoxylate. Relaxed substrate specificity of enzymes in the victorin biosynthetic pathway results in a metabolic grid that produces a set of analogs including victorinines B, C, E or HV-toxin M.

Its pathway is mycotoxin biosynthesis. In terms of biological role, ribosomally synthesized cyclic peptide victorin precursor, part of the gene cluster that mediates the biosynthesis of the secondary metabolite victorin, the molecular basis for Victoria blight of oats. The vicA1 translated product contains a 7-fold repeated peptide embedding the hexapeptide Gly-Leu-Lys-Leu-Ala-Phe, that is converted into the cyclic victorin. This chain is Ribosomally synthesized cyclic peptide victorin precursosr vicA1, found in Bipolaris victoriae (strain FI3) (Victoria blight of oats agent).